Here is a 614-residue protein sequence, read N- to C-terminus: MSTSGSGGGNTPDLSKENVASSPNANPKKNADTESSGGSKNNRQRRRSNTKGDGSNSRNGSRTNSVSNSKNQSNRKDWTDRKSFSQGGINVKSKSPGDDHKRTRSSNSQSAKRNARDSTRTMSQASNGEGLDYSDEYELDEPFSDSDDEDSRPKKPEKMSLTVARGRIRTLSGTVPVVGYSPRWGGPTMCVSCLEFFDLPEQISGFADHLLKEHKIVVSEMNLIVDPKRYIEHWRQRFAKESIDKIFPRIEPSEGDSYFGETDYYYLMSENVAEDRSLRQRLAMRRLEEALQCQQREREDTSFQLQCIFCRYNARGNRSKIIHHLYMIHHLNLGSPDNLVFVTEYIEHLKEKLHRNECIYCEKIFPDRNTLMDHMRKRNHREVNPKNHYYDKFYIINYLELGKRWLDVLAEDFEDTMPTFQDSDEEEEDNEWCEWQEDNLDADETRVVCLLCDASEDNAQSLLEHMKTTHEFDLLKNVSDDKLNSYQRLRLINYIRKQNYHADCWVCQKTEFENPLALQKHILEHKPLSHLPDASIWDTEENLVPIFGNDHFLWMLESILEENEITCSSDDEGESEERFSKLVLESKSNTVEGVIAEDLPELSELNEDDLNALM.

Gly residues predominate over residues 1–10 (MSTSGSGGGN). The segment at 1-160 (MSTSGSGGGN…SRPKKPEKMS (160 aa)) is disordered. The segment covering 18–41 (NVASSPNANPKKNADTESSGGSKN) has biased composition (polar residues). The span at 54 to 69 (GSNSRNGSRTNSVSNS) shows a compositional bias: low complexity. A compositionally biased stretch (basic and acidic residues) spans 74–83 (NRKDWTDRKS). The span at 132 to 150 (DYSDEYELDEPFSDSDDED) shows a compositional bias: acidic residues. C2H2-type zinc fingers lie at residues 356–380 (NECI…KRNH) and 447–470 (VVCL…KTTH).

The protein belongs to the ZNF277 family. In terms of assembly, interacts with rps-2.

Its subcellular location is the cytoplasm. Probable transcription factor. Limits the ability to tolerate cold environment or cold-warm stress. In complex with rps-2, mediates the cold-warm shock response by promoting translocation of components of the RNA exosome from the nucleolus to nucleoplasm. The polypeptide is Zinc finger protein ztf-7 (Caenorhabditis elegans).